The primary structure comprises 381 residues: Hydrogenase nickel incorporation protein HupN (381 aa).

The Cytoplasmic segment spans residues 1-39; sequence MLPFSMTGLEKDHTRGVLILANAHRRSERSRTASCAGPA. Residues 40–60 form a helical membrane-spanning segment; the sequence is VLFGGLITANIVAWAWAFALF. Residues 61–63 lie on the Periplasmic side of the membrane; it reads ADR. A helical transmembrane segment spans residues 64-84; sequence PVVMATALLAWVFGLRHAVDA. At 85–110 the chain is on the cytoplasmic side; the sequence is DHIAAIDNVVRSLMQTGGTPRSAGLY. The helical transmembrane segment at 111-131 threads the bilayer; sequence FALGHSSVVVVATMLLALGVV. Over 132 to 149 the chain is Periplasmic; the sequence is SLGGDGLLKEIGSFIGAS. A helical membrane pass occupies residues 150-170; it reads VSALFLLVIAAINLAIFASLW. Residues 171 to 215 are Cytoplasmic-facing; the sequence is RTFRKAREQGIRDAAGLDALLAHRGILVRLLGPMFRLVTKPWHMY. The chain crosses the membrane as a helical span at residues 216–236; that stretch reads PLGFLFGLGFDTATEIGLLSI. At 237–243 the chain is on the periplasmic side; sequence SASEAAR. Residues 244 to 264 form a helical membrane-spanning segment; that stretch reads GASLADVMVFPALFAAGMALV. At 265–292 the chain is on the cytoplasmic side; that stretch reads DTADSTLMVSAYRWAFVDPMRKLWYNLT. Residues 293–313 form a helical membrane-spanning segment; it reads ITGASVAVALFIGGIEALGLI. Residues 314-333 lie on the Periplasmic side of the membrane; the sequence is GNRLDLSGGVWTLIDALNES. The helical transmembrane segment at 334–354 threads the bilayer; the sequence is LANVGLAVIALFAIAWLLSIV. At 355 to 381 the chain is on the cytoplasmic side; the sequence is LYRRLIAGSSGLADTEVLECADATEAV.

This sequence belongs to the NiCoT transporter (TC 2.A.52) family.

It is found in the cell inner membrane. Involved in nickel incorporation/metabolism into the hydrogenase apoprotein. The sequence is that of Hydrogenase nickel incorporation protein HupN (hupN) from Bradyrhizobium diazoefficiens (strain JCM 10833 / BCRC 13528 / IAM 13628 / NBRC 14792 / USDA 110).